The following is a 400-amino-acid chain: Elongation factor Tu (400 aa).

One can recognise a tr-type G domain in the interval 10-209 (KPHVNVGTIG…AVDSYIPTPE (200 aa)). Positions 19–26 (GHVDHGKT) are G1. A GTP-binding site is contributed by 19–26 (GHVDHGKT). Residue Thr-26 coordinates Mg(2+). Residues 60–64 (GITIA) are G2. The G3 stretch occupies residues 81–84 (DCPG). GTP is bound by residues 81–85 (DCPGH) and 136–139 (NKVD). The segment at 136-139 (NKVD) is G4. The interval 174-176 (SAL) is G5.

This sequence belongs to the TRAFAC class translation factor GTPase superfamily. Classic translation factor GTPase family. EF-Tu/EF-1A subfamily. In terms of assembly, monomer.

It is found in the cytoplasm. The catalysed reaction is GTP + H2O = GDP + phosphate + H(+). Its function is as follows. GTP hydrolase that promotes the GTP-dependent binding of aminoacyl-tRNA to the A-site of ribosomes during protein biosynthesis. The polypeptide is Elongation factor Tu (Moorella thermoacetica (strain ATCC 39073 / JCM 9320)).